The primary structure comprises 549 residues: Fas-activated serine/threonine kinase (549 aa).

The segment at 1-30 is disordered; it reads MRRPRGEPGPRAPRPTEGATCAGPGESWSP. Residues 477–535 enclose the RAP domain; the sequence is VVLVLRERWHFCRDGRVLLGSRALRERHLGLMGYQLLPLPFEELESQRGLPQLKSYLRQ.

The protein belongs to the FAST protein kinase family. Interacts with TIA1; the interactions leads to TIA1 phosphorylation. Interacts with TIAR. In terms of processing, autophosphorylated on serine/threonine residues. Activated by dephosphorylation. As to expression, expressed in heart, brain, placenta, lung, liver, skeletal muscle, kidney and pancreas.

Its subcellular location is the mitochondrion matrix. It carries out the reaction L-seryl-[Fas-activated protein] + ATP = O-phospho-L-seryl-[Fas-activated protein] + ADP + H(+). The enzyme catalyses L-threonyl-[Fas-activated protein] + ATP = O-phospho-L-threonyl-[Fas-activated protein] + ADP + H(+). It catalyses the reaction L-seryl-[protein] + ATP = O-phospho-L-seryl-[protein] + ADP + H(+). The catalysed reaction is L-threonyl-[protein] + ATP = O-phospho-L-threonyl-[protein] + ADP + H(+). In terms of biological role, phosphorylates the splicing regulator TIA1, thereby promoting the inclusion of FAS exon 6, which leads to an mRNA encoding a pro-apoptotic form of the receptor. Functionally, required for the biogenesis of some mitochondrial-encoded mRNAs, specifically stabilizes ND6 (NADH dehydrogenase complex subunit 6) mRNA, and regulates its levels. The protein is Fas-activated serine/threonine kinase (FASTK) of Homo sapiens (Human).